Here is a 413-residue protein sequence, read N- to C-terminus: Serine/threonine-protein phosphatase 7 (413 aa).

A disulfide bond links C28 and C67. 4 residues coordinate Mn(2+): D84, H86, D113, and N145. H146 acts as the Proton donor in catalysis. Mn(2+)-binding residues include H197 and H303. Residues 391–413 (NVIDSDDEMDKSAMDTNNEQPNS) form a disordered region. Residues 404-413 (MDTNNEQPNS) show a composition bias toward polar residues.

Belongs to the PPP phosphatase family. PP-7 subfamily. As to quaternary structure, monomer, homodimer, and heteromer. Interacts with calmodulin (CaM3 and CaM4) and HSFA1A/HSF1. Mn(2+) is required as a cofactor. As to expression, expressed in leaves, and, to a lower extent, in stems and flowers.

Its subcellular location is the nucleus. The protein resides in the nucleoplasm. The enzyme catalyses O-phospho-L-seryl-[protein] + H2O = L-seryl-[protein] + phosphate. It catalyses the reaction O-phospho-L-threonyl-[protein] + H2O = L-threonyl-[protein] + phosphate. Its activity is regulated as follows. Inhibited by NaF and orthovanadate, as well as by divalent cations such as Ni(2+) and Zn(2+). Inhibited by polylysine with myelin basic protein as substrate, but activated by polylysine with pNPP as substrate. Reversibly regulated by redox agents. Inhibited by submillimolar Pi concentrations. Slightly repressed by calmodulin (CaM). Functionally, phosphatase active on para-nitrophenylphosphate (pNPP) and on various phosphoproteins such as myelin basic protein. Seems to act as a positive regulator of cryptochrome signaling involved in hypocotyl growth inhibition and cotyledon expansion under white and blue light conditions. Confers thermotolerance. Required for heat shock mediated-signaling pathway that leads to the expression of heat shock proteins (HSPs). This is Serine/threonine-protein phosphatase 7 (PP7) from Arabidopsis thaliana (Mouse-ear cress).